The primary structure comprises 430 residues: Adenylosuccinate synthetase (430 aa).

GTP is bound by residues 13–19 (GDEGKGK) and 41–43 (GHT). The Proton acceptor role is filled by aspartate 14. Mg(2+) is bound by residues aspartate 14 and glycine 41. IMP is bound by residues 14-17 (DEGK), 39-42 (NAGH), threonine 130, arginine 144, glutamine 225, threonine 240, and arginine 304. Residue histidine 42 is the Proton donor of the active site. A substrate-binding site is contributed by 300–306 (ATTGRAR). GTP is bound by residues arginine 306, 332-334 (KLD), and 414-416 (STG).

The protein belongs to the adenylosuccinate synthetase family. Homodimer. It depends on Mg(2+) as a cofactor.

Its subcellular location is the cytoplasm. It carries out the reaction IMP + L-aspartate + GTP = N(6)-(1,2-dicarboxyethyl)-AMP + GDP + phosphate + 2 H(+). It functions in the pathway purine metabolism; AMP biosynthesis via de novo pathway; AMP from IMP: step 1/2. Functionally, plays an important role in the de novo pathway of purine nucleotide biosynthesis. Catalyzes the first committed step in the biosynthesis of AMP from IMP. This Pseudomonas paraeruginosa (strain DSM 24068 / PA7) (Pseudomonas aeruginosa (strain PA7)) protein is Adenylosuccinate synthetase.